A 100-amino-acid polypeptide reads, in one-letter code: Large ribosomal subunit protein uL23 (100 aa).

This sequence belongs to the universal ribosomal protein uL23 family. In terms of assembly, part of the 50S ribosomal subunit. Contacts protein L29, and trigger factor when it is bound to the ribosome.

Functionally, one of the early assembly proteins it binds 23S rRNA. One of the proteins that surrounds the polypeptide exit tunnel on the outside of the ribosome. Forms the main docking site for trigger factor binding to the ribosome. This is Large ribosomal subunit protein uL23 from Idiomarina loihiensis (strain ATCC BAA-735 / DSM 15497 / L2-TR).